The chain runs to 126 residues: Aspartate 1-decarboxylase (126 aa).

The Schiff-base intermediate with substrate; via pyruvic acid role is filled by S25. S25 bears the Pyruvic acid (Ser) mark. T57 serves as a coordination point for substrate. Y58 (proton donor) is an active-site residue. Position 73–75 (73–75 (GAA)) interacts with substrate.

This sequence belongs to the PanD family. As to quaternary structure, heterooctamer of four alpha and four beta subunits. Requires pyruvate as cofactor. Post-translationally, is synthesized initially as an inactive proenzyme, which is activated by self-cleavage at a specific serine bond to produce a beta-subunit with a hydroxyl group at its C-terminus and an alpha-subunit with a pyruvoyl group at its N-terminus.

The protein resides in the cytoplasm. The enzyme catalyses L-aspartate + H(+) = beta-alanine + CO2. The protein operates within cofactor biosynthesis; (R)-pantothenate biosynthesis; beta-alanine from L-aspartate: step 1/1. Functionally, catalyzes the pyruvoyl-dependent decarboxylation of aspartate to produce beta-alanine. The chain is Aspartate 1-decarboxylase from Marinomonas sp. (strain MWYL1).